Consider the following 204-residue polypeptide: uncharacterized protein (204 aa).

Residues 118–169 (FPAASERPMPSRRLSKATQNVQTRPSERPAPCHRRPGPRGPGGRDPPEACHP) are disordered.

This is an uncharacterized protein from Encephalitozoon cuniculi (strain GB-M1) (Microsporidian parasite).